Here is a 261-residue protein sequence, read N- to C-terminus: Phosphonates import ATP-binding protein PhnC (261 aa).

The region spanning 8–253 (LRVENLSKTY…WFRRIYGEGA (246 aa)) is the ABC transporter domain. 41 to 48 (GLSGSGKS) contributes to the ATP binding site.

The protein belongs to the ABC transporter superfamily. Phosphonates importer (TC 3.A.1.9.1) family. In terms of assembly, the complex is composed of two ATP-binding proteins (PhnC), two transmembrane proteins (PhnE) and a solute-binding protein (PhnD).

The protein resides in the cell inner membrane. The enzyme catalyses phosphonate(out) + ATP + H2O = phosphonate(in) + ADP + phosphate + H(+). In terms of biological role, part of the ABC transporter complex PhnCDE involved in phosphonates import. Responsible for energy coupling to the transport system. In Bdellovibrio bacteriovorus (strain ATCC 15356 / DSM 50701 / NCIMB 9529 / HD100), this protein is Phosphonates import ATP-binding protein PhnC.